The primary structure comprises 329 residues: Homeobox protein ceh-40 (329 aa).

One can recognise a PBC domain in the interval 3–186 (EASKSIMDLL…VIQLKKRYLD (184 aa)). Residues 10 to 90 (DLLSEVVKIT…EGVAGPDDSL (81 aa)) form a PBC-A region. The tract at residues 93 to 186 (IQEAAGTDQY…VIQLKKRYLD (94 aa)) is PBC-B. The homeobox; TALE-type DNA-binding region spans 187–249 (ARRKRRNFSK…NKRIRYKKTM (63 aa)). Positions 248 to 275 (TMAKNEDERRENRKPEDRPPPGAPGAPY) are disordered. The segment covering 250–266 (AKNEDERRENRKPEDRP) has biased composition (basic and acidic residues).

Belongs to the TALE/PBX homeobox family. In terms of tissue distribution, expressed in head dopaminergic neurons.

It is found in the nucleus. Its function is as follows. Plays a role in regulating gene expression in dopaminergic neurons, acting redundantly with homeobox protein ceh-20 in head neurons. May activate dopamine pathway genes in concert with ETS domain-containing protein ast-1, and homeobox proteins ceh-43 and ceh-20. The sequence is that of Homeobox protein ceh-40 (ceh-40) from Caenorhabditis elegans.